The sequence spans 600 residues: Na(+)/dicarboxylate cotransporter 3 (600 aa).

The Cytoplasmic segment spans residues 1–16; it reads MAALAALAKKVWSARR. A helical transmembrane segment spans residues 17 to 37; that stretch reads LLVLLLVPLALLPILFALPPK. Over 38–55 the chain is Extracellular; that stretch reads EGRCLYVILLMAVYWCTE. Residues 56-76 traverse the membrane as a helical segment; that stretch reads ALPLSVTALLPIILFPFMGIL. The Cytoplasmic segment spans residues 77–82; the sequence is PSSKVC. The helical transmembrane segment at 83 to 103 threads the bilayer; it reads PQYFLDTNFLFLSGLIMASAI. At 104-137 the chain is on the extracellular side; that stretch reads EERNLHRRIALKVLMLVGVQPARLILGMMVTTSF. Residues 138–158 traverse the membrane as a helical segment; sequence LSMWLSNTASTAMMLPIASAI. The Cytoplasmic portion of the chain corresponds to 159–229; the sequence is LKSLFGQRDT…KEEEHRRNIW (71 aa). The chain crosses the membrane as a helical span at residues 230–250; the sequence is KGFLISIPYSASIGGTATLTG. Over 251 to 278 the chain is Extracellular; sequence TAPNLILLGQLKSFFPQCDVVNFGSWFI. Residues 279–299 form a helical membrane-spanning segment; the sequence is FAFPLMLLFLLVGWLWISFLY. Residues 300 to 336 lie on the Cytoplasmic side of the membrane; the sequence is GGMSWRGWRKKNSKLQDVAEDKAKAVIQEEFQNLGPI. A helical transmembrane segment spans residues 337–357; sequence KFAEQAVFILFCLFAILLFSR. The Extracellular segment spans residues 358–372; it reads DPKFIPGWASLFAPG. The chain crosses the membrane as a helical span at residues 373 to 393; it reads FVSDAVTGVAIVTILFFFPSQ. The Cytoplasmic segment spans residues 394-422; that stretch reads KPSLKWWFDFKAPNSETEPLLSWKKAQET. The helical intramembrane region spans 423 to 443; that stretch reads VPWNIILLLGGGFAMAKGCEE. The Cytoplasmic portion of the chain corresponds to 444-461; it reads SGLSAWIGGQLHPLEHVP. A helical membrane pass occupies residues 462–482; the sequence is PLLAVLLITVVIAFFTEFASN. Topologically, residues 483-505 are extracellular; the sequence is TATIIIFLPVLAELAIRLHVHPL. The helical transmembrane segment at 506 to 526 threads the bilayer; it reads YLMIPGTVSCSYAFMLPVSTP. The Cytoplasmic portion of the chain corresponds to 527-546; that stretch reads PNSIAFSTGHLLVKDMVRTG. The helical transmembrane segment at 547 to 567 threads the bilayer; that stretch reads LLMNLMGVLLLSLAMNTWAQA. Residues 568-600 lie on the Extracellular side of the membrane; it reads IFQLGTFPDWANTHAANVTALPPALTNNTVQTL. N-linked (GlcNAc...) asparagine glycans are attached at residues asparagine 584 and asparagine 594.

The protein belongs to the SLC13A/DASS transporter (TC 2.A.47) family. NADC subfamily. Highly expressed in proximal parts of straight tubules in the kidney. Detected in placenta, in brain, and in liver. Strongly expressed within the meningeal layers of supporting tissue that surround the brain and relatively weakly expressed throughout the cerebral cortex, hippocampus, and cerebellum.

Its subcellular location is the cell membrane. The enzyme catalyses succinate(out) + 3 Na(+)(out) = succinate(in) + 3 Na(+)(in). It catalyses the reaction 2-oxoglutarate(out) + 3 Na(+)(out) = 2-oxoglutarate(in) + 3 Na(+)(in). The catalysed reaction is N-acetyl-L-aspartate(out) + 3 Na(+)(out) = N-acetyl-L-aspartate(in) + 3 Na(+)(in). It carries out the reaction glutarate(out) + 3 Na(+)(out) = glutarate(in) + 3 Na(+)(in). The enzyme catalyses fumarate(out) + 3 Na(+)(out) = fumarate(in) + 3 Na(+)(in). It catalyses the reaction malate(out) + 3 Na(+)(out) = malate(in) + 3 Na(+)(in). The catalysed reaction is 2,2-dimethylsuccinate(out) + 3 Na(+)(out) = 2,2-dimethylsuccinate(in) + 3 Na(+)(in). It carries out the reaction 2,3-dimethylsuccinate(out) + 3 Na(+)(out) = 2,3-dimethylsuccinate(in) + 3 Na(+)(in). The enzyme catalyses itaconate(out) + 3 Na(+)(out) = itaconate(in) + 3 Na(+)(in). With respect to regulation, li(+) decreases succinate transport in the presence of Na(+). In terms of biological role, high-affinity sodium-dicarboxylate cotransporter that accepts a range of substrates with 4-6 carbon atoms, such as the citric acid cycle intermediates succinate and alpha-ketoglutarate (2-oxoglutarate), as well as other compounds including N-acetyl-L-aspartate. Transports the dicarboxylate into the cell with a probable stoichiometry of 3 Na(+) for 1 divalent dicarboxylate, rendering the process electrogenic. Can transport citrate in a Na(+)-dependent manner, recognizing the divalent form of citrate rather than the trivalent form which is normally found in blood. Imports itaconate in hepatocytes leading to activation of TFEB-dependent lysosomal biogenesis involved in antibacterial innate immune response. This chain is Na(+)/dicarboxylate cotransporter 3 (Slc13a3), found in Rattus norvegicus (Rat).